Consider the following 323-residue polypeptide: Methionyl-tRNA formyltransferase (323 aa).

113–116 (SLLP) is a binding site for (6S)-5,6,7,8-tetrahydrofolate.

This sequence belongs to the Fmt family.

It catalyses the reaction L-methionyl-tRNA(fMet) + (6R)-10-formyltetrahydrofolate = N-formyl-L-methionyl-tRNA(fMet) + (6S)-5,6,7,8-tetrahydrofolate + H(+). In terms of biological role, attaches a formyl group to the free amino group of methionyl-tRNA(fMet). The formyl group appears to play a dual role in the initiator identity of N-formylmethionyl-tRNA by promoting its recognition by IF2 and preventing the misappropriation of this tRNA by the elongation apparatus. The polypeptide is Methionyl-tRNA formyltransferase (Porphyromonas gingivalis (strain ATCC BAA-308 / W83)).